The sequence spans 525 residues: Protein disulfide-isomerase A2 (525 aa).

The first 21 residues, 1-21 (MSCQLLPVLLLLLLRASCPWG), serve as a signal peptide directing secretion. The region spanning 27–152 (RSPSEEPPEE…IAEWLRRRVG (126 aa)) is the Thioredoxin 1 domain. Catalysis depends on nucleophile residues C71 and C74. An intrachain disulfide couples C71 to C74. Residues N127 and N284 are each glycosylated (N-linked (GlcNAc...) asparagine). Positions 367-496 (VLNGQVKPYL…FSKFLDNGGV (130 aa)) constitute a Thioredoxin 2 domain. Catalysis depends on nucleophile residues C418 and C421. An intrachain disulfide couples C418 to C421. Residues 498-525 (PTEEPLEEPAAPFPEPPANSTMGSKEEL) are disordered. N-linked (GlcNAc...) asparagine glycosylation is present at N516. Over residues 516-525 (NSTMGSKEEL) the composition is skewed to polar residues. Positions 522-525 (KEEL) match the Prevents secretion from ER motif.

It belongs to the protein disulfide isomerase family. As to quaternary structure, monomer; predominantly as monomer under reducing conditions. Homodimer; disulfide-linked. Part of a large chaperone multiprotein complex comprising DNAJB11, HSP90B1, HSPA5, HYOU, PDIA2, PDIA4, PDIA6, PPIB, SDF2L1, UGGT1 and very small amounts of ERP29, but not, or at very low levels, CALR nor CANX. Post-translationally, the disulfide-linked homodimer exhibits an enhanced chaperone activity. In terms of processing, glycosylated.

The protein resides in the endoplasmic reticulum lumen. The catalysed reaction is Catalyzes the rearrangement of -S-S- bonds in proteins.. Acts as an intracellular estrogen-binding protein. May be involved in modulating cellular levels and biological functions of estrogens in the pancreas. May act as a chaperone that inhibits aggregation of misfolded proteins. This Pongo abelii (Sumatran orangutan) protein is Protein disulfide-isomerase A2 (PDIA2).